Here is a 118-residue protein sequence, read N- to C-terminus: Basic phospholipase A2 PA-5 (118 aa).

Disulfide bonds link cysteine 11–cysteine 71, cysteine 27–cysteine 117, cysteine 29–cysteine 45, cysteine 44–cysteine 98, cysteine 51–cysteine 91, cysteine 60–cysteine 84, and cysteine 78–cysteine 89. Tyrosine 28, glycine 30, and glycine 32 together coordinate Ca(2+). Residue histidine 48 is part of the active site. Aspartate 49 serves as a coordination point for Ca(2+). The active site involves aspartate 92.

The protein belongs to the phospholipase A2 family. Group I subfamily. D49 sub-subfamily. It depends on Ca(2+) as a cofactor. Expressed by the venom gland.

The protein resides in the secreted. The catalysed reaction is a 1,2-diacyl-sn-glycero-3-phosphocholine + H2O = a 1-acyl-sn-glycero-3-phosphocholine + a fatty acid + H(+). In terms of biological role, PLA2 catalyzes the calcium-dependent hydrolysis of the 2-acyl groups in 3-sn-phosphoglycerides. The protein is Basic phospholipase A2 PA-5 of Pseudechis australis (Mulga snake).